The following is a 393-amino-acid chain: S-adenosylmethionine synthase (393 aa).

His-17 provides a ligand contact to ATP. Mg(2+) is bound at residue Asp-19. Glu-45 is a K(+) binding site. L-methionine is bound by residues Glu-58 and Gln-106. The flexible loop stretch occupies residues 106–116; that stretch reads QSAHIAQGVDA. ATP is bound by residues 171-173, Asp-246, 252-253, Ala-269, and Lys-273; these read DAK and RK. Asp-246 is an L-methionine binding site. Lys-277 is an L-methionine binding site.

It belongs to the AdoMet synthase family. In terms of assembly, homotetramer; dimer of dimers. Mg(2+) is required as a cofactor. Requires K(+) as cofactor.

Its subcellular location is the cytoplasm. The enzyme catalyses L-methionine + ATP + H2O = S-adenosyl-L-methionine + phosphate + diphosphate. The protein operates within amino-acid biosynthesis; S-adenosyl-L-methionine biosynthesis; S-adenosyl-L-methionine from L-methionine: step 1/1. Its function is as follows. Catalyzes the formation of S-adenosylmethionine (AdoMet) from methionine and ATP. The overall synthetic reaction is composed of two sequential steps, AdoMet formation and the subsequent tripolyphosphate hydrolysis which occurs prior to release of AdoMet from the enzyme. The sequence is that of S-adenosylmethionine synthase from Roseobacter denitrificans (strain ATCC 33942 / OCh 114) (Erythrobacter sp. (strain OCh 114)).